A 230-amino-acid polypeptide reads, in one-letter code: Cytidylate kinase (230 aa).

Residue 11-19 (GPAAAGKST) coordinates ATP.

The protein belongs to the cytidylate kinase family. Type 1 subfamily.

The protein localises to the cytoplasm. The catalysed reaction is CMP + ATP = CDP + ADP. The enzyme catalyses dCMP + ATP = dCDP + ADP. This Oceanobacillus iheyensis (strain DSM 14371 / CIP 107618 / JCM 11309 / KCTC 3954 / HTE831) protein is Cytidylate kinase.